We begin with the raw amino-acid sequence, 152 residues long: SsrA-binding protein (152 aa).

Residues 124–152 are disordered; sequence KKLHDKRDTAAERDWQRDKARLMKGDRGD. Residues 128–152 show a composition bias toward basic and acidic residues; the sequence is DKRDTAAERDWQRDKARLMKGDRGD.

This sequence belongs to the SmpB family.

The protein resides in the cytoplasm. Functionally, required for rescue of stalled ribosomes mediated by trans-translation. Binds to transfer-messenger RNA (tmRNA), required for stable association of tmRNA with ribosomes. tmRNA and SmpB together mimic tRNA shape, replacing the anticodon stem-loop with SmpB. tmRNA is encoded by the ssrA gene; the 2 termini fold to resemble tRNA(Ala) and it encodes a 'tag peptide', a short internal open reading frame. During trans-translation Ala-aminoacylated tmRNA acts like a tRNA, entering the A-site of stalled ribosomes, displacing the stalled mRNA. The ribosome then switches to translate the ORF on the tmRNA; the nascent peptide is terminated with the 'tag peptide' encoded by the tmRNA and targeted for degradation. The ribosome is freed to recommence translation, which seems to be the essential function of trans-translation. The protein is SsrA-binding protein of Caulobacter vibrioides (strain ATCC 19089 / CIP 103742 / CB 15) (Caulobacter crescentus).